Consider the following 461-residue polypeptide: D-phenylhydantoinase (461 aa).

The a divalent metal cation site is built by His-59, His-61, and Lys-151. Lys-151 is subject to N6-carboxylysine. Tyr-156 is a binding site for substrate. The a divalent metal cation site is built by His-182 and His-239. Ser-286 contributes to the substrate binding site. Residue Asp-313 participates in a divalent metal cation binding. Asn-335 contributes to the substrate binding site.

The protein belongs to the metallo-dependent hydrolases superfamily. Hydantoinase/dihydropyrimidinase family. Homotetramer. The cofactor is a divalent metal cation. Carboxylation allows a single lysine to coordinate two divalent metal cations.

The enzyme catalyses D-5-phenylhydantoin + H2O = N-carbamoyl-D-phenylglycine + H(+). In terms of biological role, catalyzes the stereospecific hydrolysis of the cyclic amide bond of D-hydantoin derivatives with an aromatic side chains at the 5'-position. Has no activity on dihydropyrimidines. The physiological function is unknown. The protein is D-phenylhydantoinase of Escherichia coli (strain 55989 / EAEC).